The chain runs to 265 residues: tRNA (guanine-N(7)-)-methyltransferase (265 aa).

Over residues 1 to 16 the composition is skewed to basic and acidic residues; the sequence is MNHDDPNASGVPHDDA. The interval 1–40 is disordered; it reads MNHDDPNASGVPHDDANDAAPASASDAARATGHADDESSP. Residues 18–31 are compositionally biased toward low complexity; sequence DAAPASASDAARAT. 4 residues coordinate S-adenosyl-L-methionine: Glu-95, Glu-120, Asp-147, and Asp-170. The active site involves Asp-170. Substrate is bound by residues Lys-174, Asp-206, and 241–244; that span reads TKFE.

It belongs to the class I-like SAM-binding methyltransferase superfamily. TrmB family.

The enzyme catalyses guanosine(46) in tRNA + S-adenosyl-L-methionine = N(7)-methylguanosine(46) in tRNA + S-adenosyl-L-homocysteine. Its pathway is tRNA modification; N(7)-methylguanine-tRNA biosynthesis. Catalyzes the formation of N(7)-methylguanine at position 46 (m7G46) in tRNA. This chain is tRNA (guanine-N(7)-)-methyltransferase, found in Burkholderia thailandensis (strain ATCC 700388 / DSM 13276 / CCUG 48851 / CIP 106301 / E264).